A 389-amino-acid polypeptide reads, in one-letter code: Phospho-N-acetylmuramoyl-pentapeptide-transferase (389 aa).

Transmembrane regions (helical) follow at residues 25–45 (RAVM…PWVI), 73–93 (TMGG…WADL), 97–117 (FIWI…VDDY), 134–154 (FFWQ…SVSE), 190–210 (VSYP…IVGS), 222–242 (GLVI…AYVM), 258–278 (GAGE…AFLW), 286–306 (VFMG…IAVI), 311–331 (IVLF…MLQV), and 366–386 (QVVV…LSSL).

This sequence belongs to the glycosyltransferase 4 family. MraY subfamily. Requires Mg(2+) as cofactor.

It is found in the cell inner membrane. The catalysed reaction is UDP-N-acetyl-alpha-D-muramoyl-L-alanyl-gamma-D-glutamyl-meso-2,6-diaminopimeloyl-D-alanyl-D-alanine + di-trans,octa-cis-undecaprenyl phosphate = di-trans,octa-cis-undecaprenyl diphospho-N-acetyl-alpha-D-muramoyl-L-alanyl-D-glutamyl-meso-2,6-diaminopimeloyl-D-alanyl-D-alanine + UMP. It functions in the pathway cell wall biogenesis; peptidoglycan biosynthesis. Its function is as follows. Catalyzes the initial step of the lipid cycle reactions in the biosynthesis of the cell wall peptidoglycan: transfers peptidoglycan precursor phospho-MurNAc-pentapeptide from UDP-MurNAc-pentapeptide onto the lipid carrier undecaprenyl phosphate, yielding undecaprenyl-pyrophosphoryl-MurNAc-pentapeptide, known as lipid I. This Polynucleobacter necessarius subsp. necessarius (strain STIR1) protein is Phospho-N-acetylmuramoyl-pentapeptide-transferase.